We begin with the raw amino-acid sequence, 601 residues long: Threonine dehydratase (601 aa).

The transit peptide at Met1–Arg51 directs the protein to the chloroplast. ACT-like domains follow at residues Ala427–Asn499 and Ile521–Leu592.

It belongs to the serine/threonine dehydratase family. Pyridoxal 5'-phosphate is required as a cofactor.

It is found in the plastid. The protein resides in the chloroplast. The catalysed reaction is L-threonine = 2-oxobutanoate + NH4(+). Its pathway is amino-acid biosynthesis; L-isoleucine biosynthesis; 2-oxobutanoate from L-threonine: step 1/1. In terms of biological role, catalyzes the conversion of threonine to alpha-keto butyrate in isoleucine (Ile) biosynthesis. Required for JA-Ile biosynthesis, a signaling molecule involved in defense and resistance to the herbivore Manduca sexta caterpillars. This is Threonine dehydratase from Nicotiana attenuata (Coyote tobacco).